A 1131-amino-acid chain; its full sequence is Protein TOPLESS (1131 aa).

The LisH domain maps to 4 to 36 (LSRELVFLILQFLDEEKFKETVHKLEQESGFFF). The CTLH domain maps to 34-92 (FFFNMKYFEDEVHNGNWDEVEKYLSGFTKVDDNRYSMKIFFEIRKQKYLEALDKHDRPK). Ser-214 bears the Phosphoserine mark. A disordered region spans residues 286–305 (TPPTNASLDYPSADSEHVSK). 15 WD repeats span residues 353–393 (SQGS…RLVQ), 415–454 (EPVV…DMRQ), 460–501 (AHVG…KRHT), 504–545 (GHEA…SRVD), 548–591 (APGR…VKRT), 595–634 (FHKR…LLTA), 639–678 (GGLQ…RLLH), 710–756 (DRSA…EPSQ), 766–805 (LRVA…RNAT), 833–871 (NPEE…TMAT), 874–914 (PPPP…VKSK), 917–956 (GHSK…KQRS), 967–1005 (NSAP…CMKQ), 1010–1049 (ESLA…LRCR), and 1060–1102 (LSNS…GKWG). Residues 1100–1131 (KWGVAPPAENGSASGAPTAPSVGASASDQPQR) are disordered.

In terms of assembly, tetramer. Homodimer. Interacts (via the LisH domain) with WUS (via the C-terminal domain). Interacts with NINJA/AFPH2. Interacts with IAA1; IAA2; IAA3; IAA4; IAA6; IAA8; IAA9; IAA11; IAA13; IAA14; IAA17; IAA18; IAA26; IAA27 and IAA28. Interacts (via the LisH domain) with IAA12/BDL (via domain I). Can form a complex with IAA12 and ARF5. Interacts with AP2 (via EAR motif) and HDA19. Interacts with TIFY5A/JAZ8 (via EAR motif). Interacts with SPEAR3/TIE1. Interacts with SPL (via EAR motif). Interacts with ZAT2 and ZAT3 (via the EAR motif). Interacts with JAZ13 (via EAR motif). Interacts with GIR1 and GIR2. In terms of tissue distribution, expressed in embryo and in extraembryonic tissues. Expressed in inflorescences, flowers, floral meristems, developing anthers and ovules. Detected in the vascular tissues, shoot apical meristem, cotyledons and young leaves. Expressed ubiquitously in the pistils, stamens and pollens.

Its subcellular location is the nucleus. Functionally, transcriptional corepressor. May repress the expression of root-promoting genes in the top half of the embryo to allow proper differentiation of the shoot pole during the transition stage of embryogenesis. Regulates the expression of PLT1 and PLT2. Negative regulator of jasmonate responses. Negative regulator of auxin responses. Negative regulator of multiple floral organ identity genes. Required for ovule development. The polypeptide is Protein TOPLESS (TPL) (Arabidopsis thaliana (Mouse-ear cress)).